A 413-amino-acid chain; its full sequence is Serine hydroxymethyltransferase (413 aa).

Residues Leu119 and 123-125 contribute to the (6S)-5,6,7,8-tetrahydrofolate site; that span reads GHL. An N6-(pyridoxal phosphate)lysine modification is found at Lys228. A (6S)-5,6,7,8-tetrahydrofolate-binding site is contributed by 351-353; the sequence is SPF.

This sequence belongs to the SHMT family. As to quaternary structure, homodimer. Requires pyridoxal 5'-phosphate as cofactor.

The protein resides in the cytoplasm. The enzyme catalyses (6R)-5,10-methylene-5,6,7,8-tetrahydrofolate + glycine + H2O = (6S)-5,6,7,8-tetrahydrofolate + L-serine. It functions in the pathway one-carbon metabolism; tetrahydrofolate interconversion. Its pathway is amino-acid biosynthesis; glycine biosynthesis; glycine from L-serine: step 1/1. In terms of biological role, catalyzes the reversible interconversion of serine and glycine with tetrahydrofolate (THF) serving as the one-carbon carrier. This reaction serves as the major source of one-carbon groups required for the biosynthesis of purines, thymidylate, methionine, and other important biomolecules. Also exhibits THF-independent aldolase activity toward beta-hydroxyamino acids, producing glycine and aldehydes, via a retro-aldol mechanism. This chain is Serine hydroxymethyltransferase, found in Clostridium botulinum (strain 657 / Type Ba4).